The primary structure comprises 218 residues: Large ribosomal subunit protein bL25 (218 aa).

The tract at residues 187 to 218 (SATAAVEEAKEDGAPEESAQGQGAAEAQETNK) is disordered. Positions 202-218 (EESAQGQGAAEAQETNK) are enriched in low complexity.

The protein belongs to the bacterial ribosomal protein bL25 family. CTC subfamily. In terms of assembly, part of the 50S ribosomal subunit; part of the 5S rRNA/L5/L18/L25 subcomplex. Contacts the 5S rRNA. Binds to the 5S rRNA independently of L5 and L18.

Its function is as follows. This is one of the proteins that binds to the 5S RNA in the ribosome where it forms part of the central protuberance. This is Large ribosomal subunit protein bL25 from Anaplasma marginale (strain St. Maries).